A 393-amino-acid polypeptide reads, in one-letter code: Proteasome-activating nucleotidase (393 aa).

Positions 14–53 (SDEVQLVRLLEEKIKSLQIEIENLRKELNYYKAEMEKMLS) form a coiled coil. Residues 178 to 183 (GTGKTM) and Y317 contribute to the ATP site. The tract at residues 391–393 (KYS) is docks into pockets in the proteasome alpha-ring to cause gate opening.

It belongs to the AAA ATPase family. Homohexamer. The hexameric complex has a two-ring architecture resembling a top hat that caps the 20S proteasome core at one or both ends. Upon ATP-binding, the C-terminus of PAN interacts with the alpha-rings of the proteasome core by binding to the intersubunit pockets.

The protein localises to the cytoplasm. ATPase which is responsible for recognizing, binding, unfolding and translocation of substrate proteins into the archaeal 20S proteasome core particle. Is essential for opening the gate of the 20S proteasome via an interaction with its C-terminus, thereby allowing substrate entry and access to the site of proteolysis. Thus, the C-termini of the proteasomal ATPase function like a 'key in a lock' to induce gate opening and therefore regulate proteolysis. Unfolding activity requires energy from ATP hydrolysis, whereas ATP binding alone promotes ATPase-20S proteasome association which triggers gate opening, and supports translocation of unfolded substrates. The protein is Proteasome-activating nucleotidase of Saccharolobus islandicus (strain Y.N.15.51 / Yellowstone #2) (Sulfolobus islandicus).